Reading from the N-terminus, the 114-residue chain is Notch-regulated ankyrin repeat-containing protein (114 aa).

ANK repeat units follow at residues 50–79 (EGQTALHQSVIDGNLELVKLLVKFGADIRL) and 83–112 (DGWSALHIAAYGGHQDIVLYLITKAKYSSS).

Belongs to the NRARP family. Forms a ternary complex with the intracellular domain (ICD) of notch1 and rbpj/suh.

Promotes loss of intracellular domain (ICD) of Notch1 in embryos. By down-regulating ICD levels, could function as a negative feedback regulator of Notch signaling that attenuates ICD-mediated transcription. Involved in angiogenesis. May be involved in somitogenesis. The polypeptide is Notch-regulated ankyrin repeat-containing protein (nrarp) (Xenopus laevis (African clawed frog)).